Consider the following 36-residue polypeptide: ISINQDLKAITDMLLTEQIRERQRYLADLRQRLLEK.

K36 bears the Lysine amide mark.

Belongs to the molluscan ELH family. In terms of tissue distribution, bag cell neurons.

The protein localises to the secreted. Functionally, ELH acts as a neurotransmitter locally, upon neurons of the abdominal ganglion and as a hormone by diffusing into the circulating hemolymph and modulating the activity of other organs. It specifically causes contraction of smooth muscle in the ovotestis and expulsion of the egg string. This is Egg-laying hormone from Aplysia fasciata (Mottled sea hare).